The chain runs to 95 residues: MKIEVIKKEENLLEFYLEGEDHTFANLLVETLRENPHVKFTAYTIEHPITMARKPRFRVVTDGEITPEEALEEAAKKIFERAKEVLEAWEKAVKS.

Belongs to the archaeal Rpo11/eukaryotic RPB11/RPC19 RNA polymerase subunit family. In terms of assembly, part of the RNA polymerase complex.

Its subcellular location is the cytoplasm. The catalysed reaction is RNA(n) + a ribonucleoside 5'-triphosphate = RNA(n+1) + diphosphate. In terms of biological role, DNA-dependent RNA polymerase (RNAP) catalyzes the transcription of DNA into RNA using the four ribonucleoside triphosphates as substrates. The protein is DNA-directed RNA polymerase subunit Rpo11 of Pyrococcus furiosus (strain ATCC 43587 / DSM 3638 / JCM 8422 / Vc1).